A 3056-amino-acid chain; its full sequence is MTTINIGTIPVVINQNADTQMGEGTKNIFPIVKDFVDPFADLEMRCAERVKRMGELCFSKKGRYITMIPKPDYIKAREKEQREEELNFQNSEHVLNSLDTTCTPEHHSSRNNGMQVSFKTQHYKRTFRKPRIQAKKRDLKGQHTIHYVAKELLSIVKKRDMVLEVVDKRKHANFATFRRYGKTYGMHITLNHMVRKRRRVDVTLNKLMTEIAMHCAIPFECLNTLTLRKGHSGLVLQTETVPNVHKIKSKITIVRGVVNEGNIPVLIDARKKLSGRDMSTIREFSAGDLFWKGYNQTFIDNRPTDLNHQCTSDLNVTQCGSVMALLTLALFPCGRITCKKCVENFLNQNNKERFNNASVFINQVIQLLEKGFSEFKHSKEILLMFKERLQMENPATDQCMEIAKATAALPEAPFSHIKEINNVLLKYGSLSNEEVGGASKHLLEVVRYIRNRTDSIQRNDLSKFRNKISSKTHINLDLMCDNQLDKNANFVWGQRAYHAKRFLSNYFNEINPSEGYDKFIFRKLPNGARELAIGRLIMPTNFEAFREQMKGKMIDNGPIGKDCVSRMRGSFCYPCCCTTDDVGTAVISDFKMPTKYHLVLGGNDLAKYIKLPTDTTGNMYIAKDGFCHINIFFAMLVNVSEEKSKDFTKMVRDQIMPKLGEWPTMMDVATACWQLTVWFPDTLSAELPRILVDHKLGIMHVLDSYGSISAGYHVLKANIVSQLIKFASDDLESELKYYRVGGDCNFGSRVRIDTKFLLKSIYRPDLLERIIEHEPFVLVLAMQSPAVLLALFNSASLEKAVQYWMHREMQVSHIMTLLAVLASNVSASKLLTTQFEIIEASAPQILAEMDKVHLPMHSIHSANVFLMNMSESRETDKTIDELGFYSFKKSSRILMEKTLMADLEEQWQGLGLLERLSLIKRSWRVRAKYSSFAIQREEPGIRDKFTTSLKLSGAQIKQQLLAQKDQAVHFVERRIEGTKKFVANQSISLIKMCLPRLADIVNILTVIALLNAILAFMLDHIKRFNEARRIAQEKKEKQHLKELNTLYNKYWDNEKPTYLEFKSDVIEKLPHTLATFEKYYFEDDKYTFQAKPNDMVALEKIIAVTALVLMIFDAERSDCVYKVLNKLKGILSTTTQDAYRFQSLDTSKTLLEEKEMTIDFEINEGEVKAFSGTQTTFSEWWDNQLQNGNVITHYRTEGQFMEFTRANAQPVANEIAHNDAHDILVRGAVGSGKSTGLPFYLSNKGKVLMIESTRPLAENVFKQLKSEPFYASPTLRMRGTTSYGASPITIMTSGYALHYYANNPAMMKEYKFVIIDECHVHDANAIAFVSLLKEYSFDGKLIKVSATPPGREVEFTTQYPVTLVTEESLSFEQFVSQQGTGANCDMLDVCDNILVYVASYNEVDQLSKMLLDRGHIVTKVDGRTMKNGKTEIESKGSRSKRHFIVATNIIENGVTLDIEGVVDFGLKVVPELDVDNRLMRYTKQNVSYGERIQRLGRVGRHKAGKALRIGVTEKGLVKPPSVITTEAAFYCFAYGLPVMAEGVTPSLLSKCTVQQARSMMSFELPIMYTVNLVRFDGTMHPSVHNLLKPYKLRDSNVVLNKMAIPHGNVRNWPTVRDFKCMGVRIDAPEDTRVPFHARDIPDKLHKEIFEVCCKYKGDAGFSKLNVVNACKIAYTLQTDPSSIQRTIKILDELIAREQQKREYFQNVANTSCAGSSYSLSNIINAIRARSTSDYTQENLSVLHSARAQLLEFKNINSDFSNLSTLSEFGALECLQFESLQEISKHLQLKGHWNKPVLIQDFLIAAGVLGGGCWMLYQYFKQETSKAFVFQGKNRRTKQKLRFRDARDMKGRMEVYADEGTIVENFGSKYTKKGKVRGTTTGMGTKTRRFTNMYGFDPTEYSFARYLDPITGETLDEQPITNLNLVSEHFQEMRRKYRENEIMESQQFAANPRIEAYFVKDAGQKVLKVDLTPHKPLLYSDKFGNIMGYPEREGELRQTGAAEFIDPKELPEPKESTDFDFESLSKIGGLRDYNPIAANVCLLENESAEYCDEIYGIGYGNVIITNQHLFRHNNGELTIKSKHGTFKCKNTCALKLLPIEGHDLLLIQMPKDFPVFPQKLRFREPTHEDKIVLVSTNFQEKSFSSVVSESSNISRVKQANFFKHWISTVAGQCGNPMVSTKDGFIVGIHSLTAVSGDLNVFTSIPPNFEDEVLKQMSKKSWCCGWKLNMSQIGWDGIKIVDDQPKDPFPVSKMVGLLNDLQLSFQSAKNTKWLLERAHGNIKAVAQASSALVTKHVVKGKCRLFEVYLTTDEEAEKFFRPLMGAYQKSRLNKEAYVKDLMKYATPIEVGLVDTRCFERSFEKVQNMLELKGFSKCNYVTYGPDILSALNMKAAMGALYSGKKKDHFSEISEEKFDNILQASCERLYSGRMGVWNGSLKAELRPQEKVLANKTRSFTAAPIDTLLAGKVCVDDFNNKFYSLHLKIPSTVGITKFYGGWDRLLDSLPDGWVYCDADGSQFDSSLTPYLLNAVLEMRLRLMEEWDLGEQMLKNLYTEIVYTPILTPDGTIVKKFKGNNSGQPSTVVDNTLMVIMAVYYAAEKLGIKGNLEDTLVFFANGDDLLIAIKPECESYLDKFEGLFSELGLKYDFSSRTKNKGDLWFMSHRGIQIDGMWIPKLEEERIVSILEWDRAIQPEHRLEAICAAMIEAWGYPTLLNHIRKFYLWVLGQAPYSQLSAEGKAPYISEVALKHLYTEEKVTPTELERYNIALIDCFESESDEVLTCRFQSDQEQLNAGEEKKDKRKKNEGDPNKDSEGQSVRQIVPDRDVNAGTVGTFSVPRLKKIAGKLNIPKIGGKIVLNLDHLLEYNPPQDDISNVIATQAQFEAWYNGVKQAYEVEDSQMGIILNGLMVWCIENGTSGDLQGEWTMMDGEEQVTYPLKPILDNAKPTFRQIMSHFSEVAEAYIEKRNATERYMPRYGLQRNLTDYGLARYAFDFYKLTSRTPVRAREAHMQMKAAAVRGKSTRLFGLDGNVGTDEENTERHTAGDVNRDMHTMLGVRI.

Residues 139–284 (LKGQHTIHYV…GRDMSTIREF (146 aa)) enclose the Peptidase S30 domain. Residues H192, D201, and S232 each act as for P1 proteinase activity in the active site. An Involved in interaction with stylet and aphid transmission motif is present at residues 335–338 (RITC). The Involved in virions binding and aphid transmission motif lies at 593–595 (PTK). In terms of domain architecture, Peptidase C6 spans 619-741 (MYIAKDGFCH…ESELKYYRVG (123 aa)). Catalysis depends on for helper component proteinase activity residues C627 and H700. The region spanning 1214-1366 (EIAHNDAHDI…TQYPVTLVTE (153 aa)) is the Helicase ATP-binding domain. Position 1227 to 1234 (1227 to 1234 (GAVGSGKS)) interacts with ATP. Positions 1316 to 1319 (DECH) match the DECH box motif. A Helicase C-terminal domain is found at 1385–1544 (DMLDVCDNIL…GLPVMAEGVT (160 aa)). The Nuclear localization signal signature appears at 1871-1878 (KKGKVRGT). Y1893 carries the O-(5'-phospho-RNA)-tyrosine modification. In terms of domain architecture, Peptidase C4 spans 2022–2240 (SLSKIGGLRD…IGWDGIKIVD (219 aa)). Active-site for nuclear inclusion protein A activity residues include H2067, D2102, and C2172. In terms of domain architecture, RdRp catalytic spans 2507–2630 (WVYCDADGSQ…AIKPECESYL (124 aa)). Residues 2788-2820 (QLNAGEEKKDKRKKNEGDPNKDSEGQSVRQIVP) are disordered. Basic and acidic residues predominate over residues 2792–2811 (GEEKKDKRKKNEGDPNKDSE). T3040 carries the phosphothreonine modification.

This sequence belongs to the potyviridae genome polyprotein family. In terms of assembly, interacts with host eIF4E protein (via cap-binding region); this interaction mediates the translation of the VPg-viral RNA conjugates. Part of a complex that comprises VPg, RNA, host EIF4E and EIF4G; this interaction mediates the translation of the VPg-viral RNA conjugates. In terms of processing, VPg is uridylylated by the polymerase and is covalently attached to the 5'-end of the genomic RNA. This uridylylated form acts as a nucleotide-peptide primer for the polymerase. Post-translationally, potyviral RNA is expressed as two polyproteins which undergo post-translational proteolytic processing. Genome polyprotein is processed by NIa-pro, P1 and HC-pro proteinases resulting in the production of at least ten individual proteins. P3N-PIPO polyprotein is cleaved by P1 and HC-pro proteinases resulting in the production of three individual proteins. The P1 proteinase and the HC-pro cleave only their respective C-termini autocatalytically. 6K1 is essential for proper proteolytic separation of P3 from CI.

The protein localises to the host cytoplasmic vesicle. It localises to the host nucleus. Its subcellular location is the virion. The catalysed reaction is RNA(n) + a ribonucleoside 5'-triphosphate = RNA(n+1) + diphosphate. It carries out the reaction Hydrolyzes glutaminyl bonds, and activity is further restricted by preferences for the amino acids in P6 - P1' that vary with the species of potyvirus, e.g. Glu-Xaa-Xaa-Tyr-Xaa-Gln-|-(Ser or Gly) for the enzyme from tobacco etch virus. The natural substrate is the viral polyprotein, but other proteins and oligopeptides containing the appropriate consensus sequence are also cleaved.. The enzyme catalyses Hydrolyzes a Gly-|-Gly bond at its own C-terminus, commonly in the sequence -Tyr-Xaa-Val-Gly-|-Gly, in the processing of the potyviral polyprotein.. Its function is as follows. Required for aphid transmission and also has proteolytic activity. Only cleaves a Gly-Gly dipeptide at its own C-terminus. Interacts with virions and aphid stylets. Acts as a suppressor of RNA-mediated gene silencing, also known as post-transcriptional gene silencing (PTGS), a mechanism of plant viral defense that limits the accumulation of viral RNAs. May have RNA-binding activity. In terms of biological role, has helicase activity. It may be involved in replication. Functionally, indispensable for virus replication. Reduces the abundance of host transcripts related to jasmonic acid biosynthesis therefore altering the host defenses. In order to increase its own stability, decreases host protein degradation pathways. Indispensable for virus replication. Its function is as follows. Mediates the cap-independent, EIF4E-dependent translation of viral genomic RNAs. Binds to the cap-binding site of host EIF4E and thus interferes with the host EIF4E-dependent mRNA export and translation. VPg-RNA directly binds EIF4E and is a template for transcription. Also forms trimeric complexes with EIF4E-EIF4G, which are templates for translation. In terms of biological role, has RNA-binding and proteolytic activities. Functionally, an RNA-dependent RNA polymerase that plays an essential role in the virus replication. Involved in aphid transmission, cell-to-cell and systemis movement, encapsidation of the viral RNA and in the regulation of viral RNA amplification. This chain is Genome polyprotein, found in Arachis hypogaea (Peanut).